Here is a 64-residue protein sequence, read N- to C-terminus: Large ribosomal subunit protein bL28 (64 aa).

Residues 1–23 (MARKDQISHRGPLSGNNRSHALN) are disordered.

It belongs to the bacterial ribosomal protein bL28 family.

This chain is Large ribosomal subunit protein bL28, found in Mesomycoplasma hyopneumoniae (strain 232) (Mycoplasma hyopneumoniae).